The chain runs to 84 residues: MKANIHPAYAETTVVCGCGNTFQTRSTKPGGRIVVEVCSQCHPFYTGKQKILDSGGRVARFEKRYGKRKVGVDQVAAYPEQNNK.

Residues Cys-16, Cys-18, Cys-38, and Cys-41 each contribute to the Zn(2+) site.

The protein belongs to the bacterial ribosomal protein bL31 family. Type A subfamily. Part of the 50S ribosomal subunit. The cofactor is Zn(2+).

Binds the 23S rRNA. The chain is Large ribosomal subunit protein bL31 from Mycobacterium leprae (strain Br4923).